A 465-amino-acid chain; its full sequence is Cysteine--tRNA ligase (465 aa).

Residue Cys-27 coordinates Zn(2+). The 'HIGH' region signature appears at Pro-29–His-39. Zn(2+) contacts are provided by Cys-207, His-237, and Glu-241. The 'KMSKS' region motif lies at Lys-269–Ser-273. Lys-272 is an ATP binding site.

This sequence belongs to the class-I aminoacyl-tRNA synthetase family. As to quaternary structure, monomer. It depends on Zn(2+) as a cofactor.

It is found in the cytoplasm. The enzyme catalyses tRNA(Cys) + L-cysteine + ATP = L-cysteinyl-tRNA(Cys) + AMP + diphosphate. The sequence is that of Cysteine--tRNA ligase from Nitratiruptor sp. (strain SB155-2).